We begin with the raw amino-acid sequence, 81 residues long: Protein translocase subunit SecE (81 aa).

A helical transmembrane segment spans residues 50-70 (VAVILMVILVSTVIYFVDQIF).

This sequence belongs to the SecE/SEC61-gamma family. In terms of assembly, component of the Sec protein translocase complex. Heterotrimer consisting of SecY, SecE and SecG subunits. The heterotrimers can form oligomers, although 1 heterotrimer is thought to be able to translocate proteins. Interacts with the ribosome. Interacts with SecDF, and other proteins may be involved. Interacts with SecA.

The protein localises to the cell inner membrane. It localises to the cellular thylakoid membrane. Essential subunit of the Sec protein translocation channel SecYEG. Clamps together the 2 halves of SecY. May contact the channel plug during translocation. This Synechocystis sp. (strain ATCC 27184 / PCC 6803 / Kazusa) protein is Protein translocase subunit SecE.